Here is a 696-residue protein sequence, read N- to C-terminus: Polyribonucleotide nucleotidyltransferase (696 aa).

Mg(2+) contacts are provided by Asp-483 and Asp-489. A KH domain is found at 550–609 (PRITTIWVKVDKIRDVIGSGGKNIRSVTEATGVSIDIDDTGKINIASTNKEACDLAIKMI). Residues 619-687 (GKLYMGTVKK…KQGKIKLSRK (69 aa)) form the S1 motif domain.

The protein belongs to the polyribonucleotide nucleotidyltransferase family. Mg(2+) serves as cofactor.

It localises to the cytoplasm. The enzyme catalyses RNA(n+1) + phosphate = RNA(n) + a ribonucleoside 5'-diphosphate. Involved in mRNA degradation. Catalyzes the phosphorolysis of single-stranded polyribonucleotides processively in the 3'- to 5'-direction. The chain is Polyribonucleotide nucleotidyltransferase from Citrifermentans bemidjiense (strain ATCC BAA-1014 / DSM 16622 / JCM 12645 / Bem) (Geobacter bemidjiensis).